We begin with the raw amino-acid sequence, 97 residues long: Large ribosomal subunit protein eL21 (97 aa).

It belongs to the eukaryotic ribosomal protein eL21 family.

The sequence is that of Large ribosomal subunit protein eL21 from Methanosarcina barkeri (strain Fusaro / DSM 804).